Reading from the N-terminus, the 649-residue chain is Echinoderm microtubule-associated protein-like 2 (649 aa).

The tandem atypical propeller in EMLs stretch occupies residues 10–649 (KEVIFSVEDG…DTSVLQWRVV (640 aa)). Coiled coils occupy residues 13–58 (IFSV…LKLE) and 73–114 (YLLP…LAIH). WD repeat units lie at residues 56 to 93 (KLEW…LYSV), 97 to 144 (RQRH…IWDS), 151 to 192 (HVLG…VWDW), 195 to 234 (ETKV…FWTL), 241 to 280 (KRQG…VWGK), 285 to 323 (ITQA…LWGS), 369 to 406 (FSLL…LWSS), 410 to 447 (QPLW…LLDT), 452 to 489 (LVAI…VYTV), 495 to 535 (KVSR…YWDP), 564 to 602 (FGIW…LFSY), and 609 to 648 (ALSH…QWRV).

This sequence belongs to the WD repeat EMAP family. Homotrimer; self-association is mediated by the N-terminal coiled coil. In terms of assembly, interacts with GRID2 and may also interact with GRID1. Interacts with EML3. Binds unpolymerized tubulins via its WD repeat region. As to expression, ubiquitous.

The protein localises to the cytoplasm. It localises to the cytoskeleton. Its subcellular location is the spindle. Tubulin binding protein that inhibits microtubule nucleation and growth, resulting in shorter microtubules. In Homo sapiens (Human), this protein is Echinoderm microtubule-associated protein-like 2 (EML2).